The following is a 332-amino-acid chain: tRNA U34 carboxymethyltransferase (332 aa).

Carboxy-S-adenosyl-L-methionine contacts are provided by residues Lys91, Trp105, Lys110, Gly130, 152–154 (DPS), 181–182 (IE), Met196, Tyr200, and Arg315.

The protein belongs to the class I-like SAM-binding methyltransferase superfamily. CmoB family. In terms of assembly, homotetramer.

The catalysed reaction is carboxy-S-adenosyl-L-methionine + 5-hydroxyuridine(34) in tRNA = 5-carboxymethoxyuridine(34) in tRNA + S-adenosyl-L-homocysteine + H(+). Its function is as follows. Catalyzes carboxymethyl transfer from carboxy-S-adenosyl-L-methionine (Cx-SAM) to 5-hydroxyuridine (ho5U) to form 5-carboxymethoxyuridine (cmo5U) at position 34 in tRNAs. In Shewanella sp. (strain W3-18-1), this protein is tRNA U34 carboxymethyltransferase.